The sequence spans 89 residues: Small ribosomal subunit protein uS15 (89 aa).

It belongs to the universal ribosomal protein uS15 family. As to quaternary structure, part of the 30S ribosomal subunit. Forms a bridge to the 50S subunit in the 70S ribosome, contacting the 23S rRNA.

Functionally, one of the primary rRNA binding proteins, it binds directly to 16S rRNA where it helps nucleate assembly of the platform of the 30S subunit by binding and bridging several RNA helices of the 16S rRNA. Its function is as follows. Forms an intersubunit bridge (bridge B4) with the 23S rRNA of the 50S subunit in the ribosome. This is Small ribosomal subunit protein uS15 from Streptococcus uberis (strain ATCC BAA-854 / 0140J).